A 572-amino-acid polypeptide reads, in one-letter code: Phosphoenolpyruvate-protein phosphotransferase (572 aa).

Residue His191 is the Tele-phosphohistidine intermediate of the active site. Positions 298 and 334 each coordinate phosphoenolpyruvate. Mg(2+) is bound by residues Glu433 and Asp457. Residues 456–457 and Arg467 contribute to the phosphoenolpyruvate site; that span reads ND. Cys504 acts as the Proton donor in catalysis.

This sequence belongs to the PEP-utilizing enzyme family. As to quaternary structure, homodimer. Mg(2+) is required as a cofactor.

Its subcellular location is the cytoplasm. The catalysed reaction is L-histidyl-[protein] + phosphoenolpyruvate = N(pros)-phospho-L-histidyl-[protein] + pyruvate. Functionally, general (non sugar-specific) component of the phosphoenolpyruvate-dependent sugar phosphotransferase system (sugar PTS). This major carbohydrate active-transport system catalyzes the phosphorylation of incoming sugar substrates concomitantly with their translocation across the cell membrane. Enzyme I transfers the phosphoryl group from phosphoenolpyruvate (PEP) to the phosphoryl carrier protein (HPr). The polypeptide is Phosphoenolpyruvate-protein phosphotransferase (ptsI) (Staphylococcus epidermidis (strain ATCC 35984 / DSM 28319 / BCRC 17069 / CCUG 31568 / BM 3577 / RP62A)).